The chain runs to 392 residues: 23S rRNA (uracil(747)-C(5))-methyltransferase RlmC (392 aa).

[4Fe-4S] cluster-binding residues include C4, C12, C15, and C93. 4 residues coordinate S-adenosyl-L-methionine: Q218, F247, E275, and N321. The active-site Nucleophile is the C348.

It belongs to the class I-like SAM-binding methyltransferase superfamily. RNA M5U methyltransferase family. RlmC subfamily.

It carries out the reaction uridine(747) in 23S rRNA + S-adenosyl-L-methionine = 5-methyluridine(747) in 23S rRNA + S-adenosyl-L-homocysteine + H(+). Functionally, catalyzes the formation of 5-methyl-uridine at position 747 (m5U747) in 23S rRNA. This chain is 23S rRNA (uracil(747)-C(5))-methyltransferase RlmC, found in Haemophilus influenzae (strain ATCC 51907 / DSM 11121 / KW20 / Rd).